We begin with the raw amino-acid sequence, 317 residues long: Egg-laying defective protein 26 (317 aa).

Residues 156–277 (EVNVSGVKFY…CSTGVPFSYD (122 aa)) form the LRAT domain. Residues histidine 166 and histidine 178 contribute to the active site. Cysteine 261 (acyl-thioester intermediate) is an active-site residue.

In terms of tissue distribution, highly expressed in the cells of the spermatheca, the mouth, and the lining of the pharynx, the rectum, and the excretory canal. Also expressed in the pharyngeal intestinal junction cell.

It is found in the apical cell membrane. Functionally, putative acyltransferase. Plays a role in the morphogenesis of a vulval toroid cell, vulF, which is located where the vulva and the uterus connect. Not required for specifying vulval cell fate. In Caenorhabditis elegans, this protein is Egg-laying defective protein 26.